The following is a 258-amino-acid chain: Axonemal dynein light intermediate polypeptide 1 (258 aa).

Disordered regions lie at residues 1–60 and 202–231; these read MIPP…CVPD and DLERQVNEQKAKCEATEKRESERRQVEEKK. The stretch at 176–255 forms a coiled coil; that stretch reads MRKALQAEQG…LKAQLEGIIA (80 aa).

Belongs to the inner dynein arm light chain family. As to quaternary structure, interacts with CFAP45. Interacts with DYNC1H1.

It is found in the cell projection. The protein resides in the cilium. It localises to the flagellum. Its subcellular location is the dynein axonemal particle. The protein localises to the cytoplasm. Involved in sperm flagellum assembly. The polypeptide is Axonemal dynein light intermediate polypeptide 1 (Rattus norvegicus (Rat)).